Here is a 124-residue protein sequence, read N- to C-terminus: Small ribosomal subunit protein uS12 (124 aa).

Asp-89 carries the post-translational modification 3-methylthioaspartic acid. The tract at residues 102-124 (LDTSGVNNRKHGRSKYGTKRPKS) is disordered. A compositionally biased stretch (basic residues) spans 109–124 (NRKHGRSKYGTKRPKS).

The protein belongs to the universal ribosomal protein uS12 family. As to quaternary structure, part of the 30S ribosomal subunit. Contacts proteins S8 and S17. May interact with IF1 in the 30S initiation complex.

Functionally, with S4 and S5 plays an important role in translational accuracy. Its function is as follows. Interacts with and stabilizes bases of the 16S rRNA that are involved in tRNA selection in the A site and with the mRNA backbone. Located at the interface of the 30S and 50S subunits, it traverses the body of the 30S subunit contacting proteins on the other side and probably holding the rRNA structure together. The combined cluster of proteins S8, S12 and S17 appears to hold together the shoulder and platform of the 30S subunit. This Francisella tularensis subsp. novicida (strain U112) protein is Small ribosomal subunit protein uS12.